Here is a 239-residue protein sequence, read N- to C-terminus: Ribonuclease HII (239 aa).

One can recognise an RNase H type-2 domain in the interval 18 to 231 (KIIVGLDEAG…SKNLLKEIEE (214 aa)). A divalent metal cation-binding residues include Asp24, Glu25, and Asp125.

Belongs to the RNase HII family. Requires Mn(2+) as cofactor. The cofactor is Mg(2+).

The protein resides in the cytoplasm. The enzyme catalyses Endonucleolytic cleavage to 5'-phosphomonoester.. In terms of biological role, endonuclease that specifically degrades the RNA of RNA-DNA hybrids. The sequence is that of Ribonuclease HII from Methanococcus maripaludis (strain C6 / ATCC BAA-1332).